The following is a 118-amino-acid chain: NADH-ubiquinone oxidoreductase chain 3 (118 aa).

Transmembrane regions (helical) follow at residues 9–29 (IYLV…FLFA), 62–82 (LVSI…PWAV), and 87–107 (IDLF…IGSL).

It belongs to the complex I subunit 3 family.

It localises to the mitochondrion membrane. The catalysed reaction is a ubiquinone + NADH + 5 H(+)(in) = a ubiquinol + NAD(+) + 4 H(+)(out). Core subunit of the mitochondrial membrane respiratory chain NADH dehydrogenase (Complex I) that is believed to belong to the minimal assembly required for catalysis. Complex I functions in the transfer of electrons from NADH to the respiratory chain. The immediate electron acceptor for the enzyme is believed to be ubiquinone. The sequence is that of NADH-ubiquinone oxidoreductase chain 3 (ND3) from Zea mays (Maize).